A 251-amino-acid chain; its full sequence is NADH-quinone oxidoreductase subunit C (251 aa).

The tract at residues 1–34 is disordered; sequence MSDANNTAGDANEVNPEKDLSAENLPGQRGQGGE.

The protein belongs to the complex I 30 kDa subunit family. NDH-1 is composed of 14 different subunits. Subunits NuoB, C, D, E, F, and G constitute the peripheral sector of the complex.

The protein resides in the cell membrane. The catalysed reaction is a quinone + NADH + 5 H(+)(in) = a quinol + NAD(+) + 4 H(+)(out). Functionally, NDH-1 shuttles electrons from NADH, via FMN and iron-sulfur (Fe-S) centers, to quinones in the respiratory chain. The immediate electron acceptor for the enzyme in this species is believed to be a menaquinone. Couples the redox reaction to proton translocation (for every two electrons transferred, four hydrogen ions are translocated across the cytoplasmic membrane), and thus conserves the redox energy in a proton gradient. This Streptomyces coelicolor (strain ATCC BAA-471 / A3(2) / M145) protein is NADH-quinone oxidoreductase subunit C.